Reading from the N-terminus, the 140-residue chain is uncharacterized protein (140 aa).

The next 4 helical transmembrane spans lie at 4–24 (LLLA…SFSG), 56–76 (EAFI…YLLW), 84–104 (SAAA…LFFS), and 109–129 (IRDV…YVLA).

It localises to the cell membrane. May be important for peptidoglycan remodeling. This is an uncharacterized protein from Bacillus subtilis (strain 168).